The following is a 733-amino-acid chain: Hypermethylated in cancer 1 protein (733 aa).

The BTB domain maps to 47 to 110 (CDVIIVVQNA…IYTGRLADGA (64 aa)). Residues 154 to 315 (KYCHLRGGGG…PFRGGSGSPG (162 aa)) form a mediates HDAC-dependent transcriptional repression region. R159 carries the post-translational modification Omega-N-methylarginine. Residues 189–209 (YPSPVGPPPPPAAEPPSGPEA) form a disordered region. The span at 192 to 206 (PVGPPPPPAAEPPSG) shows a compositional bias: pro residues. Position 237 is a phosphoserine (S237). The tract at residues 241-247 (GLDLSKK) is interaction with CTBP1. Positions 241–421 (GLDLSKKSPP…PGGHLEGYPC (181 aa)) are disordered. S248 bears the Phosphoserine mark. Residues 284 to 293 (LALPSLPPLP) are compositionally biased toward pro residues. An N6-acetyllysine; alternate modification is found at K333. K333 participates in a covalent cross-link: Glycyl lysine isopeptide (Lys-Gly) (interchain with G-Cter in SUMO); alternate. Basic and acidic residues predominate over residues 344-361 (ELGRERGSPSERCEERGG). Position 366 is a phosphoserine (S366). The span at 368-380 (GGPPLGLAPPPRY) shows a compositional bias: pro residues. 5 consecutive C2H2-type zinc fingers follow at residues 439-459 (CIPC…VEAH), 509-529 (CASC…EKTH), 537-557 (CTIC…MRSH), 565-585 (CDAC…MRIH), and 593-613 (CQVC…MKMH). A Phosphoserine modification is found at S704.

This sequence belongs to the krueppel C2H2-type zinc-finger protein family. Hic subfamily. Self-associates. Interacts with HIC2. Interacts with CTBP1 and CTBP2. Interacts with TCF7L2 and ARID1A. Interacts with MTA1 and MBD3; indicative for an association with the NuRD complex. Interacts with SIRT1. Acetylated on several residues, including Lys-333. Lys-333 is deacetylated by SIRT1. In terms of processing, sumoylated on Lys-333 by a PIAS family member, which enhances interaction with MTA1, positively regulates transcriptional repression activity and is enhanced by HDAC4. In terms of tissue distribution, ubiquitously expressed with highest levels found in lung, colon, prostate, thymus, testis and ovary. Expression is absent or decreased in many tumor cells.

Its subcellular location is the nucleus. In terms of biological role, transcriptional repressor. Recognizes and binds to the consensus sequence '5-[CG]NG[CG]GGGCA[CA]CC-3'. May act as a tumor suppressor. Involved in development of head, face, limbs and ventral body wall. Involved in down-regulation of SIRT1 and thereby is involved in regulation of p53/TP53-dependent apoptotic DNA-damage responses. The specific target gene promoter association seems to be depend on corepressors, such as CTBP1 or CTBP2 and MTA1. In cooperation with MTA1 (indicative for an association with the NuRD complex) represses transcription from CCND1/cyclin-D1 and CDKN1C/p57Kip2 specifically in quiescent cells. Involved in regulation of the Wnt signaling pathway probably by association with TCF7L2 and preventing TCF7L2 and CTNNB1 association with promoters of TCF-responsive genes. Seems to repress transcription from E2F1 and ATOH1 which involves ARID1A, indicative for the participation of a distinct SWI/SNF-type chromatin-remodeling complex. Probably represses transcription of ACKR3, FGFBP1 and EFNA1. The chain is Hypermethylated in cancer 1 protein (HIC1) from Homo sapiens (Human).